A 192-amino-acid polypeptide reads, in one-letter code: Elongation factor P (192 aa).

It belongs to the elongation factor P family.

It localises to the cytoplasm. It functions in the pathway protein biosynthesis; polypeptide chain elongation. Involved in peptide bond synthesis. Stimulates efficient translation and peptide-bond synthesis on native or reconstituted 70S ribosomes in vitro. Probably functions indirectly by altering the affinity of the ribosome for aminoacyl-tRNA, thus increasing their reactivity as acceptors for peptidyl transferase. The polypeptide is Elongation factor P (Borreliella afzelii (strain PKo) (Borrelia afzelii)).